The sequence spans 775 residues: MIDSISEETLIVKSYTVNHCAKNVPVFINSYDLTAEVAKNEDVRLARQVQISLEKIDEVIESIFSASGPSVENVKDQAKFALCRLLLGPVSIPCYCEEWDVNFYLTKCSYNCEGPVLYIYKNASQCCESTYRFSIMTNYHSTHIFRGLLSLQEWNSHLSNILCTCSNVTGDKYTATIFPNNASIYLEYYPYFLCYLCKHLSIIDIEQCTNELIAFLGPKTSQRIIIHYKLLFGFRSKPMNFTVSLLEQVFTLEIQKLYYSVSKHNSTTADFFNVITAKFAEDKYFVLRTFKLSAQITPGIQSFCSLKFKLQTLYLNLKIMKNTKLSISNSFYHGKTLYTLDEKQLVWRNLLLIYYGYNLKDNVKQTQEESLLSMHYIRILERLSLKSFREINQQFSFEIPSYQEKTLQFIPGGNDFAEITSVTHGETTVNAFNTNRVMNVKAALSGEIHCVLHRIPKSMTHSFVMYKRTFKEPSLTVSTFISNDDFTTSSLNINIRGPYCDFLYALGVYRLHVNIQDFFLPAFVCNSNNSMDLHGLENQGIVRKRKKKVYWITNFPCMISNSEKVNVGWFKAGTGIIPKVSGTDLKNVLLKELISIGEIPNITFDMDLHALLTLLEKRNMHQVPFLIKQFFMFLRLGLLVGYGRKQERKVHHIMLFLIQKGFFDFSKNSVANSKIKHACALVGSRLANNVPKILSKQKKMKLDHLGRNANALTVLRFIVENGYYKRKTIFRKLLKYLATTSFNAHVQTESNRLLNLMHNDSKTNFSSLERLYTLR.

It belongs to the herpesviridae UL87 family.

The polypeptide is Protein U58 (U58) (Homo sapiens (Human)).